Here is a 165-residue protein sequence, read N- to C-terminus: Putative ankyrin repeat domain-containing protein 20A5 (165 aa).

3 ANK repeats span residues 66–95 (QHRT…QIDI), 99–128 (ENRT…NPNL), and 132–161 (YGNT…NIEA).

The chain is Putative ankyrin repeat domain-containing protein 20A5 (ANKRD20A5P) from Homo sapiens (Human).